Here is a 273-residue protein sequence, read N- to C-terminus: uncharacterized protein (273 aa).

The protein resides in the virion. This is an uncharacterized protein from Acanthamoeba polyphaga (Amoeba).